The primary structure comprises 639 residues: Elongation factor 4 (639 aa).

The tr-type G domain maps to 39-220; sequence AQIRNFCIIA…EVVRLVPPPT (182 aa). GTP is bound by residues 51–56 and 167–170; these read DHGKST and NKID.

This sequence belongs to the TRAFAC class translation factor GTPase superfamily. Classic translation factor GTPase family. LepA subfamily.

The protein resides in the cell membrane. It catalyses the reaction GTP + H2O = GDP + phosphate + H(+). Functionally, required for accurate and efficient protein synthesis under certain stress conditions. May act as a fidelity factor of the translation reaction, by catalyzing a one-codon backward translocation of tRNAs on improperly translocated ribosomes. Back-translocation proceeds from a post-translocation (POST) complex to a pre-translocation (PRE) complex, thus giving elongation factor G a second chance to translocate the tRNAs correctly. Binds to ribosomes in a GTP-dependent manner. This Mycobacterium sp. (strain JLS) protein is Elongation factor 4.